The chain runs to 349 residues: Protein RecA (349 aa).

69 to 76 serves as a coordination point for ATP; sequence GPESSGKT.

This sequence belongs to the RecA family.

It localises to the cytoplasm. Functionally, can catalyze the hydrolysis of ATP in the presence of single-stranded DNA, the ATP-dependent uptake of single-stranded DNA by duplex DNA, and the ATP-dependent hybridization of homologous single-stranded DNAs. It interacts with LexA causing its activation and leading to its autocatalytic cleavage. This chain is Protein RecA, found in Crocosphaera subtropica (strain ATCC 51142 / BH68) (Cyanothece sp. (strain ATCC 51142)).